The chain runs to 169 residues: Cell division inhibitor SulA (169 aa).

The ftsZ binding stretch occupies residues 106-112 (ALRTGNY). The segment at 162–169 (KIHSNLYH) is lon protease binding.

This sequence belongs to the SulA family. Interacts with FtsZ. Post-translationally, is rapidly cleaved and degraded by the Lon protease once DNA damage is repaired.

Functionally, component of the SOS system and an inhibitor of cell division. Accumulation of SulA causes rapid cessation of cell division and the appearance of long, non-septate filaments. In the presence of GTP, binds a polymerization-competent form of FtsZ in a 1:1 ratio, thus inhibiting FtsZ polymerization and therefore preventing it from participating in the assembly of the Z ring. This mechanism prevents the premature segregation of damaged DNA to daughter cells during cell division. This is Cell division inhibitor SulA from Shigella boydii serotype 18 (strain CDC 3083-94 / BS512).